The sequence spans 511 residues: V-type proton ATPase subunit B, brain isoform (511 aa).

R400 contributes to the ATP binding site.

This sequence belongs to the ATPase alpha/beta chains family. As to quaternary structure, V-ATPase is a heteromultimeric enzyme made up of two complexes: the ATP-hydrolytic V1 complex and the proton translocation V0 complex. The V1 complex consists of three catalytic AB heterodimers that form a heterohexamer, three peripheral stalks each consisting of EG heterodimers, one central rotor including subunits D and F, and the regulatory subunits C and H. The proton translocation complex V0 consists of the proton transport subunit a, a ring of proteolipid subunits c9c'', rotary subunit d, subunits e and f, and the accessory subunits ATP6AP1/Ac45 and ATP6AP2/PRR. In terms of tissue distribution, expressed in brain (at protein level). Expressed in all tissues tested, but highest in brain and in adrenal medulla.

The protein localises to the apical cell membrane. The protein resides in the melanosome. Its subcellular location is the cytoplasm. It is found in the cytoplasmic vesicle. It localises to the clathrin-coated vesicle membrane. The protein localises to the secretory vesicle. The protein resides in the synaptic vesicle membrane. Its function is as follows. Non-catalytic subunit of the V1 complex of vacuolar(H+)-ATPase (V-ATPase), a multisubunit enzyme composed of a peripheral complex (V1) that hydrolyzes ATP and a membrane integral complex (V0) that translocates protons. V-ATPase is responsible for acidifying and maintaining the pH of intracellular compartments and in some cell types, is targeted to the plasma membrane, where it is responsible for acidifying the extracellular environment. In renal intercalated cells, can partially compensate the lack of ATP6V1B1 and mediate secretion of protons (H+) into the urine under base-line conditions but not in conditions of acid load. This is V-type proton ATPase subunit B, brain isoform (ATP6V1B2) from Bos taurus (Bovine).